A 464-amino-acid polypeptide reads, in one-letter code: Fumarate hydratase class II (464 aa).

Residues 98 to 100, 129 to 132, 139 to 141, and threonine 187 each bind substrate; these read SGT, HPND, and SSN. Histidine 188 (proton donor/acceptor) is an active-site residue. Serine 318 is a catalytic residue. Substrate-binding positions include serine 319 and 324-326; that span reads KVN.

The protein belongs to the class-II fumarase/aspartase family. Fumarase subfamily. As to quaternary structure, homotetramer.

The protein localises to the cytoplasm. The enzyme catalyses (S)-malate = fumarate + H2O. The protein operates within carbohydrate metabolism; tricarboxylic acid cycle; (S)-malate from fumarate: step 1/1. Involved in the TCA cycle. Catalyzes the stereospecific interconversion of fumarate to L-malate. The sequence is that of Fumarate hydratase class II from Haemophilus ducreyi (strain 35000HP / ATCC 700724).